Here is a 397-residue protein sequence, read N- to C-terminus: Flavohemoprotein A (397 aa).

A Globin domain is found at 2 to 137 (SLSQQSISII…IAQAFIDAEA (136 aa)). His84 serves as a coordination point for heme b. Active-site charge relay system residues include Tyr94 and Glu136. The interval 150-397 (WRDTREFIVD…YEIFGPLTNV (248 aa)) is reductase. An FAD-binding FR-type domain is found at 151-266 (RDTREFIVDR…SPPAGDYVVD (116 aa)). FAD contacts are provided by residues Tyr189 and 208-211 (RHYS). An NADP(+)-binding site is contributed by 279–284 (GVGITP). Residue 390-393 (IFGP) coordinates FAD.

This sequence belongs to the globin family. Two-domain flavohemoproteins subfamily. It in the C-terminal section; belongs to the flavoprotein pyridine nucleotide cytochrome reductase family. FAD serves as cofactor. Requires heme b as cofactor.

It localises to the cytoplasm. The catalysed reaction is 2 nitric oxide + NADPH + 2 O2 = 2 nitrate + NADP(+) + H(+). It carries out the reaction 2 nitric oxide + NADH + 2 O2 = 2 nitrate + NAD(+) + H(+). Is involved in NO detoxification in an aerobic process, termed nitric oxide dioxygenase (NOD) reaction that utilizes O(2) and NAD(P)H to convert NO to nitrate, which protects the cell from various noxious nitrogen compounds. Therefore, plays a central role in the inducible response to nitrosative stress. In terms of biological role, in the presence of oxygen and NADH, it has NADH oxidase activity, which leads to the generation of superoxide and H(2)O(2). Under anaerobic conditions, it also exhibits nitric oxide reductase and FAD reductase activities. However, all these reactions are much lower than NOD activity. The sequence is that of Flavohemoprotein A (fhbA) from Dictyostelium discoideum (Social amoeba).